The primary structure comprises 714 residues: Fatty acid oxidation complex subunit alpha (714 aa).

The segment at 1 to 190 is enoyl-CoA hydratase; sequence MDTVSAFKLE…KAGLVDEVVP (190 aa). The 3-hydroxyacyl-CoA dehydrogenase stretch occupies residues 306–714; sequence GPLTSIAVLG…TFWPADERLT (409 aa).

The protein in the N-terminal section; belongs to the enoyl-CoA hydratase/isomerase family. In the central section; belongs to the 3-hydroxyacyl-CoA dehydrogenase family. As to quaternary structure, heterotetramer of two alpha chains (FadJ) and two beta chains (FadI).

Its subcellular location is the cytoplasm. It catalyses the reaction a (3S)-3-hydroxyacyl-CoA = a (2E)-enoyl-CoA + H2O. It carries out the reaction a 4-saturated-(3S)-3-hydroxyacyl-CoA = a (3E)-enoyl-CoA + H2O. The catalysed reaction is a (3S)-3-hydroxyacyl-CoA + NAD(+) = a 3-oxoacyl-CoA + NADH + H(+). The enzyme catalyses (3S)-3-hydroxybutanoyl-CoA = (3R)-3-hydroxybutanoyl-CoA. The protein operates within lipid metabolism; fatty acid beta-oxidation. Its function is as follows. Catalyzes the formation of a hydroxyacyl-CoA by addition of water on enoyl-CoA. Also exhibits 3-hydroxyacyl-CoA epimerase and 3-hydroxyacyl-CoA dehydrogenase activities. The sequence is that of Fatty acid oxidation complex subunit alpha from Klebsiella pneumoniae (strain 342).